Consider the following 330-residue polypeptide: MTTAIRQAEGEEALDHFQVGSYSPYLFFSSEEWARFRADTPLTLTLDEVHRLRSIDDPIDLAEVRRIYLALSRLLSSHVESSQLLFEQRNRFLSTNVTKTPFIIGIAGSVAVGKSTTARVLKELLARWPSSPKVDLVTTDGFLYSNATLVRDNKLNRKGFPESYDTAALLRFLSAIKAGQQNVKAPRYSHLTYDVLPDQHTIIDRPDILIFEGINVLQSRDLPRDGKIVPMVSDFFDFSIYIDAEESLIHNWYVKRFMKLRQTAFRDPNSYFHRYATISEDEASTIAENLWSHINLINLRDNIQPTRPRADLILRKGENHLVEQVALRKL.

Residue 108–115 coordinates ATP; that stretch reads GSVAVGKS.

The protein belongs to the prokaryotic pantothenate kinase family.

It localises to the cytoplasm. The enzyme catalyses (R)-pantothenate + ATP = (R)-4'-phosphopantothenate + ADP + H(+). The protein operates within cofactor biosynthesis; coenzyme A biosynthesis; CoA from (R)-pantothenate: step 1/5. The protein is Pantothenate kinase of Allorhizobium ampelinum (strain ATCC BAA-846 / DSM 112012 / S4) (Agrobacterium vitis (strain S4)).